We begin with the raw amino-acid sequence, 248 residues long: 3-deoxy-manno-octulosonate cytidylyltransferase (248 aa).

This sequence belongs to the KdsB family.

It localises to the cytoplasm. It catalyses the reaction 3-deoxy-alpha-D-manno-oct-2-ulosonate + CTP = CMP-3-deoxy-beta-D-manno-octulosonate + diphosphate. Its pathway is nucleotide-sugar biosynthesis; CMP-3-deoxy-D-manno-octulosonate biosynthesis; CMP-3-deoxy-D-manno-octulosonate from 3-deoxy-D-manno-octulosonate and CTP: step 1/1. It participates in bacterial outer membrane biogenesis; lipopolysaccharide biosynthesis. Its function is as follows. Activates KDO (a required 8-carbon sugar) for incorporation into bacterial lipopolysaccharide in Gram-negative bacteria. The protein is 3-deoxy-manno-octulosonate cytidylyltransferase of Syntrophus aciditrophicus (strain SB).